Here is a 148-residue protein sequence, read N- to C-terminus: Large ribosomal subunit protein bL9 (148 aa).

Belongs to the bacterial ribosomal protein bL9 family.

Functionally, binds to the 23S rRNA. The polypeptide is Large ribosomal subunit protein bL9 (Hydrogenobaculum sp. (strain Y04AAS1)).